A 499-amino-acid chain; its full sequence is Probable cytosol aminopeptidase (499 aa).

Mn(2+)-binding residues include Lys-269 and Asp-274. Lys-281 is a catalytic residue. The Mn(2+) site is built by Asp-292, Asp-351, and Glu-353. Arg-355 is a catalytic residue.

This sequence belongs to the peptidase M17 family. Mn(2+) serves as cofactor.

The protein resides in the cytoplasm. The catalysed reaction is Release of an N-terminal amino acid, Xaa-|-Yaa-, in which Xaa is preferably Leu, but may be other amino acids including Pro although not Arg or Lys, and Yaa may be Pro. Amino acid amides and methyl esters are also readily hydrolyzed, but rates on arylamides are exceedingly low.. The enzyme catalyses Release of an N-terminal amino acid, preferentially leucine, but not glutamic or aspartic acids.. Functionally, presumably involved in the processing and regular turnover of intracellular proteins. Catalyzes the removal of unsubstituted N-terminal amino acids from various peptides. The chain is Probable cytosol aminopeptidase from Actinobacillus pleuropneumoniae serotype 3 (strain JL03).